Here is a 194-residue protein sequence, read N- to C-terminus: Glycerol-3-phosphate acyltransferase (194 aa).

6 helical membrane-spanning segments follow: residues 2–22 (AFFCFIVLTYFIGAIPSGVWI), 52–72 (LGVAVLIMDVLKGFIPLYIAS), 80–100 (DLVILGLVAILAHTFSCFISF), 112–132 (VFLFLIPVITLILLAIFILVA), 137–157 (YVSLASITAAFLLPIFTFFTH), and 161–181 (YLFALSVIIAVFVIYRHKTNI).

The protein belongs to the PlsY family. As to quaternary structure, probably interacts with PlsX.

The protein localises to the cell inner membrane. It carries out the reaction an acyl phosphate + sn-glycerol 3-phosphate = a 1-acyl-sn-glycero-3-phosphate + phosphate. Its pathway is lipid metabolism; phospholipid metabolism. Catalyzes the transfer of an acyl group from acyl-phosphate (acyl-PO(4)) to glycerol-3-phosphate (G3P) to form lysophosphatidic acid (LPA). This enzyme utilizes acyl-phosphate as fatty acyl donor, but not acyl-CoA or acyl-ACP. The sequence is that of Glycerol-3-phosphate acyltransferase from Fusobacterium nucleatum subsp. nucleatum (strain ATCC 25586 / DSM 15643 / BCRC 10681 / CIP 101130 / JCM 8532 / KCTC 2640 / LMG 13131 / VPI 4355).